We begin with the raw amino-acid sequence, 234 residues long: Ubiquinone biosynthesis O-methyltransferase (234 aa).

Residues Arg40, Gly59, Asp80, and Met123 each coordinate S-adenosyl-L-methionine.

Belongs to the methyltransferase superfamily. UbiG/COQ3 family.

It carries out the reaction a 3-demethylubiquinol + S-adenosyl-L-methionine = a ubiquinol + S-adenosyl-L-homocysteine + H(+). The catalysed reaction is a 3-(all-trans-polyprenyl)benzene-1,2-diol + S-adenosyl-L-methionine = a 2-methoxy-6-(all-trans-polyprenyl)phenol + S-adenosyl-L-homocysteine + H(+). Its pathway is cofactor biosynthesis; ubiquinone biosynthesis. O-methyltransferase that catalyzes the 2 O-methylation steps in the ubiquinone biosynthetic pathway. This chain is Ubiquinone biosynthesis O-methyltransferase, found in Coxiella burnetii (strain CbuK_Q154) (Coxiella burnetii (strain Q154)).